The chain runs to 635 residues: Phosphomethylpyrimidine synthase (635 aa).

Positions 1–14 (MNATVSSAVQSSLP) are enriched in polar residues. The segment at 1–41 (MNATVSSAVQSSLPFSGKTAQVDEGTVKPLPRSQKTYLSGS) is disordered. Substrate-binding positions include N240, M269, Y298, H334, 354–356 (SRG), 395–398 (DGLR), and E434. H438 provides a ligand contact to Zn(2+). Y461 provides a ligand contact to substrate. Residue H502 participates in Zn(2+) binding. [4Fe-4S] cluster-binding residues include C582, C585, and C590.

The protein belongs to the ThiC family. In terms of assembly, homodimer. [4Fe-4S] cluster is required as a cofactor.

The catalysed reaction is 5-amino-1-(5-phospho-beta-D-ribosyl)imidazole + S-adenosyl-L-methionine = 4-amino-2-methyl-5-(phosphooxymethyl)pyrimidine + CO + 5'-deoxyadenosine + formate + L-methionine + 3 H(+). It participates in cofactor biosynthesis; thiamine diphosphate biosynthesis. In terms of biological role, catalyzes the synthesis of the hydroxymethylpyrimidine phosphate (HMP-P) moiety of thiamine from aminoimidazole ribotide (AIR) in a radical S-adenosyl-L-methionine (SAM)-dependent reaction. The chain is Phosphomethylpyrimidine synthase from Nitrosospira multiformis (strain ATCC 25196 / NCIMB 11849 / C 71).